Reading from the N-terminus, the 551-residue chain is Probable metalloreductase AIM14 (551 aa).

Transmembrane regions (helical) follow at residues 25–45 (GIIIFAISVIHILFFLLVKFI), 67–87 (PTWMLITLWILIIFFIGGANI), 100–117 (RYGRIAYCLLPLNIYLIL), 138–155 (KWLSRLISICTLIHAIGY), 172–192 (FLNFLGIVVFVMFAVLIIVSI), 199–221 (YYSLFYIIHNITAWSMVVLIIFH), and 225–247 (GVTIFGIICLILMCYQLLYLRFY). The Ferric oxidoreductase domain maps to 102–217 (GRIAYCLLPL…NITAWSMVVL (116 aa)). Positions 247 to 369 (YKSYPVNNLK…GGSGISFGLP (123 aa)) constitute an FAD-binding FR-type domain. The disordered stretch occupies residues 440-492 (QDESHAKVEQTQGEEEVDGLLNQDENGIPLQSMKKESFPKKEEGEDEEKSSKD). The span at 472–492 (MKKESFPKKEEGEDEEKSSKD) shows a compositional bias: basic and acidic residues.

The protein belongs to the ferric reductase (FRE) family. AIM14 subfamily.

The protein localises to the membrane. Its function is as follows. Probable cell surface metalloreductase. May be involved in iron or copper homeostasis. This chain is Probable metalloreductase AIM14 (AIM14), found in Candida tropicalis (strain ATCC MYA-3404 / T1) (Yeast).